Consider the following 311-residue polypeptide: Bifunctional protein FolD (311 aa).

NADP(+) contacts are provided by residues 180–182, S209, and I250; that span reads GRS.

The protein belongs to the tetrahydrofolate dehydrogenase/cyclohydrolase family. Homodimer.

The enzyme catalyses (6R)-5,10-methylene-5,6,7,8-tetrahydrofolate + NADP(+) = (6R)-5,10-methenyltetrahydrofolate + NADPH. It catalyses the reaction (6R)-5,10-methenyltetrahydrofolate + H2O = (6R)-10-formyltetrahydrofolate + H(+). It participates in one-carbon metabolism; tetrahydrofolate interconversion. In terms of biological role, catalyzes the oxidation of 5,10-methylenetetrahydrofolate to 5,10-methenyltetrahydrofolate and then the hydrolysis of 5,10-methenyltetrahydrofolate to 10-formyltetrahydrofolate. This Haloquadratum walsbyi (strain DSM 16790 / HBSQ001) protein is Bifunctional protein FolD.